A 172-amino-acid chain; its full sequence is Lipoprotein signal peptidase (172 aa).

The next 2 helical transmembrane spans lie at 70 to 90 and 94 to 114; these read ERWLLVAGTALIAAGIVAWIW and AKGDVVALGLVLGGAIGNIAD. Active-site residues include aspartate 123 and aspartate 142. A helical membrane pass occupies residues 134–154; it reads PFLVFNVADAAITIGVLILVL.

The protein belongs to the peptidase A8 family.

The protein resides in the cell inner membrane. The catalysed reaction is Release of signal peptides from bacterial membrane prolipoproteins. Hydrolyzes -Xaa-Yaa-Zaa-|-(S,diacylglyceryl)Cys-, in which Xaa is hydrophobic (preferably Leu), and Yaa (Ala or Ser) and Zaa (Gly or Ala) have small, neutral side chains.. The protein operates within protein modification; lipoprotein biosynthesis (signal peptide cleavage). In terms of biological role, this protein specifically catalyzes the removal of signal peptides from prolipoproteins. This is Lipoprotein signal peptidase from Rhizorhabdus wittichii (strain DSM 6014 / CCUG 31198 / JCM 15750 / NBRC 105917 / EY 4224 / RW1) (Sphingomonas wittichii).